Here is a 478-residue protein sequence, read N- to C-terminus: Sulfate adenylyltransferase subunit 1 (478 aa).

Residues 24–240 enclose the tr-type G domain; sequence KSLLRFLTCG…VLENVDIDAD (217 aa). Positions 33-40 are G1; it reads GSVDDGKS. 33–40 is a binding site for GTP; the sequence is GSVDDGKS. Residues 91-95 are G2; the sequence is GITID. The G3 stretch occupies residues 112 to 115; sequence DTPG. Residues 112 to 116 and 167 to 170 each bind GTP; these read DTPGH and NKMD. The interval 167-170 is G4; sequence NKMD. Residues 206 to 208 form a G5 region; the sequence is SAL.

It belongs to the TRAFAC class translation factor GTPase superfamily. Classic translation factor GTPase family. CysN/NodQ subfamily. As to quaternary structure, heterodimer composed of CysD, the smaller subunit, and CysN.

The enzyme catalyses sulfate + ATP + H(+) = adenosine 5'-phosphosulfate + diphosphate. The protein operates within sulfur metabolism; hydrogen sulfide biosynthesis; sulfite from sulfate: step 1/3. With CysD forms the ATP sulfurylase (ATPS) that catalyzes the adenylation of sulfate producing adenosine 5'-phosphosulfate (APS) and diphosphate, the first enzymatic step in sulfur assimilation pathway. APS synthesis involves the formation of a high-energy phosphoric-sulfuric acid anhydride bond driven by GTP hydrolysis by CysN coupled to ATP hydrolysis by CysD. This is Sulfate adenylyltransferase subunit 1 from Aliivibrio fischeri (strain MJ11) (Vibrio fischeri).